The following is a 440-amino-acid chain: R3H and coiled-coil domain-containing protein 1 (440 aa).

In terms of domain architecture, R3H spans 16 to 81 (NDFVHRIQEE…KRRTVICHQD (66 aa)). The segment at 154–225 (TSVLKREAPA…LGPESQSGKG (72 aa)) is disordered. Residues 157-168 (LKREAPAGRDPE) show a composition bias toward basic and acidic residues. Serine 236 is subject to Phosphoserine. Residues 242 to 300 (LEKGKESLLEKRLVAEEEEDEEEVEEDGPSSCSEDDYSELLQEITDNLTKKEIQIEKIH) are a coiled coil. The segment at 254 to 276 (LVAEEEEDEEEVEEDGPSSCSED) is disordered. Acidic residues predominate over residues 257–276 (EEEEDEEEVEEDGPSSCSED).

The polypeptide is R3H and coiled-coil domain-containing protein 1 (Homo sapiens (Human)).